Reading from the N-terminus, the 165-residue chain is Nucleotide-binding protein Syncc9605_0652 (165 aa).

It belongs to the YajQ family.

Functionally, nucleotide-binding protein. The protein is Nucleotide-binding protein Syncc9605_0652 of Synechococcus sp. (strain CC9605).